A 662-amino-acid chain; its full sequence is Potassium channel KAT3 (662 aa).

Residues 1 to 90 (MSTTTTEARS…HFDRRYRLWE (90 aa)) lie on the Cytoplasmic side of the membrane. A helical transmembrane segment spans residues 91-111 (LFLVILVGYSAWASLFELAFE). At 112–118 (KAAEGAL) the chain is on the extracellular side. Residues 119 to 139 (LTIDLVVDFFFAVDIILTFFV) form a helical membrane-spanning segment. Topologically, residues 140-163 (SYLDNTTYLNVTDHKLIAKRYLKS) are cytoplasmic. Residues 164–184 (VAFVMDVASTLPIQFIYKTIT) form a helical membrane-spanning segment. Residues 185-194 (GDVGRGQAFG) lie on the Extracellular side of the membrane. Residues 195–215 (FLNLLRLWRLRRVAELFKRLE) form a helical; Voltage-sensor membrane-spanning segment. Over 216–229 (KDAHFNYFVIRVIK) the chain is Cytoplasmic. The helical transmembrane segment at 230 to 250 (LLCVTIFWIHLAGCILYWIAY) threads the bilayer. At 251-277 (HYPRPTDTWIGSQVEDFKERSVWLGYT) the chain is on the extracellular side. The pore-forming intramembrane region spans 278-297 (YSMYWSIVTLTTVGYGDLHA). Residues 298–301 (VNSR) are Extracellular-facing. The chain crosses the membrane as a helical span at residues 302–322 (EKTFNMFYMLFNIGLTSYIIG). Over 323 to 662 (IMTNLVVHGA…LRENDHLYIF (340 aa)) the chain is Cytoplasmic. 406-527 (LFKGFPEGLL…MIIANFMTYL (122 aa)) contributes to the a nucleoside 3',5'-cyclic phosphate binding site. Residues 528 to 558 (KGLNDELKKEIPFLRDLLDDADAQVQETVQS) are a coiled coil. Residues 591–662 (RVIIHGQAPP…LRENDHLYIF (72 aa)) form the KHA domain.

This sequence belongs to the potassium channel family. Plant (TC 1.A.1.4) subfamily. As to quaternary structure, the potassium channel is probably composed of a homo- or heterotetrameric complex of pore-forming subunits. May interact with AKT1 and AKT2. Interacts with SLAC1. As to expression, expressed predominantly in root hairs and root endodermis and, at a lower level, in leaf nodes, trichomes, and hydathodes.

It is found in the membrane. In terms of biological role, probable modulatory (alpha) subunit of inward-rectifying potassium channels. Could mediate potassium uptake from the soil solution by plant roots in association with AKT1. This is Potassium channel KAT3 (KAT3) from Arabidopsis thaliana (Mouse-ear cress).